The chain runs to 108 residues: Large ribosomal subunit protein uL24 (108 aa).

Belongs to the universal ribosomal protein uL24 family. In terms of assembly, part of the 50S ribosomal subunit.

Its function is as follows. One of two assembly initiator proteins, it binds directly to the 5'-end of the 23S rRNA, where it nucleates assembly of the 50S subunit. Functionally, one of the proteins that surrounds the polypeptide exit tunnel on the outside of the subunit. This Mycoplasma genitalium (strain ATCC 33530 / DSM 19775 / NCTC 10195 / G37) (Mycoplasmoides genitalium) protein is Large ribosomal subunit protein uL24.